The primary structure comprises 506 residues: uncharacterized protein (506 aa).

This sequence to group II intron maturases.

The protein resides in the plastid. Its subcellular location is the chloroplast. This is an uncharacterized protein from Euglena gracilis.